The primary structure comprises 229 residues: Large ribosomal subunit protein uL1 (229 aa).

It belongs to the universal ribosomal protein uL1 family. Part of the 50S ribosomal subunit.

Functionally, binds directly to 23S rRNA. The L1 stalk is quite mobile in the ribosome, and is involved in E site tRNA release. In terms of biological role, protein L1 is also a translational repressor protein, it controls the translation of the L11 operon by binding to its mRNA. In Listeria monocytogenes serovar 1/2a (strain ATCC BAA-679 / EGD-e), this protein is Large ribosomal subunit protein uL1.